Consider the following 673-residue polypeptide: UvrABC system protein B (673 aa).

Residues 26–183 (EGLEDGLAHQ…RRLAELQYTR (158 aa)) enclose the Helicase ATP-binding domain. 39-46 (GVTGSGKT) contacts ATP. Residues 92 to 115 (YYDYYQPEAYVPSSDTFIEKDASV) carry the Beta-hairpin motif. The Helicase C-terminal domain maps to 431–597 (QVDDLLSEIR…GLNKKVVDIL (167 aa)). Positions 633 to 668 (QQKIHELEGQMMQHAQNLEFEEAAEIRDQLHQLREL) constitute a UVR domain.

It belongs to the UvrB family. In terms of assembly, forms a heterotetramer with UvrA during the search for lesions. Interacts with UvrC in an incision complex.

It localises to the cytoplasm. In terms of biological role, the UvrABC repair system catalyzes the recognition and processing of DNA lesions. A damage recognition complex composed of 2 UvrA and 2 UvrB subunits scans DNA for abnormalities. Upon binding of the UvrA(2)B(2) complex to a putative damaged site, the DNA wraps around one UvrB monomer. DNA wrap is dependent on ATP binding by UvrB and probably causes local melting of the DNA helix, facilitating insertion of UvrB beta-hairpin between the DNA strands. Then UvrB probes one DNA strand for the presence of a lesion. If a lesion is found the UvrA subunits dissociate and the UvrB-DNA preincision complex is formed. This complex is subsequently bound by UvrC and the second UvrB is released. If no lesion is found, the DNA wraps around the other UvrB subunit that will check the other stand for damage. This is UvrABC system protein B from Citrobacter koseri (strain ATCC BAA-895 / CDC 4225-83 / SGSC4696).